A 318-amino-acid chain; its full sequence is Thioredoxin reductase (318 aa).

36-43 contacts FAD; it reads TGMQQGGQ. An intrachain disulfide couples Cys-136 to Cys-139. Position 286–295 (286–295) interacts with FAD; sequence DVMDHNYRQA.

This sequence belongs to the class-II pyridine nucleotide-disulfide oxidoreductase family. In terms of assembly, homodimer. FAD is required as a cofactor.

The protein resides in the cytoplasm. The enzyme catalyses [thioredoxin]-dithiol + NADP(+) = [thioredoxin]-disulfide + NADPH + H(+). This Vibrio cholerae serotype O1 (strain ATCC 39315 / El Tor Inaba N16961) protein is Thioredoxin reductase (trxB).